The sequence spans 79 residues: Translational regulator CsrA (79 aa).

Belongs to the CsrA/RsmA family. As to quaternary structure, homodimer; the beta-strands of each monomer intercalate to form a hydrophobic core, while the alpha-helices form wings that extend away from the core.

It is found in the cytoplasm. In terms of biological role, a translational regulator that binds mRNA to regulate translation initiation and/or mRNA stability. Usually binds in the 5'-UTR at or near the Shine-Dalgarno sequence preventing ribosome-binding, thus repressing translation. Its main target seems to be the major flagellin gene, while its function is anatagonized by FliW. The polypeptide is Translational regulator CsrA (Maridesulfovibrio salexigens (strain ATCC 14822 / DSM 2638 / NCIMB 8403 / VKM B-1763) (Desulfovibrio salexigens)).